Here is a 960-residue protein sequence, read N- to C-terminus: MEGAHLAWELAHAVLLLSLIPAGGSVPHEESSLVVNKGEELRLKCNEEGPVTWNFQNSDPSAKTRISNEKEWHTKNATIRDIGRYECKSKGSIVNSFYVFVKDPNVLFLVDSLIYGKEDSDILLVCPLTDPDVLNFTLRKCDGKPLPKNMTFIPNPQKGIIIKNVQRSFKGCYQCLAKHNGVEKISEHIFLNVRPVHKALPVITLSKSYELLKEGEEFEVTCIITDVDSSVKASWISYKSAIVTSKSRNLGDYGYERKLTLNIRSVGVNDSGEFTCQAENPFGKTNATVTLKALAKGFVRLFATMNTTIDINAGQNGNLTVEYEAYPKPKEEVWMYMNETLQNSSDHYVKFKTVGNNSYTSELHLTRLKGTEGGIYTFFVSNSDASSSVTFNVYVKTKPEILTLDMLGNDILQCVATGFPAPTIYWYFCPGTEQRCLDSPTISPMDVKVSYTNSSVPSFERILVESTVNASMFKSTGTICCEASSNGDKSSVFFNFAIKEQIRTHTLFTPLLIAFGVAAGLMCIIVMILVYIYLQKPKYEVQWKVVEEINGNNYVYIDPTQLPYDHKWEFPRNRLSFGKTLGAGAFGKVVEATAYGLFKSDAAMTVAVKMLKPSAHLTEREALMSELKVLSYLGNHINIVNLLGACTIGGPTLVITEYCCYGDLLNFLRRKRDSFICPKHEEHAEAAVYENLLHQAEPTADAVNEYMDMKPGVSYAVPPKADKKRPVKSGSYTDQDVTLSMLEDDELALDVEDLLSFSYQVAKGMSFLASKNCIHRDLAARNILLTHGRITKICDFGLARDIRNDSNYVVKGNARLPVKWMAPESIFNCVYTFESDVWSYGILLWELFSLGSSPYPGMPVDSKFYKMIKEGYRMFSPECSPPEMYDIMKSCWDADPLQRPTFKQIVQLIEQQLSDNAPRVYANFSTPPSTQGNATDHSVRINSVGSSASSTQPLLVREDV.

The first 24 residues, 1–24 (MEGAHLAWELAHAVLLLSLIPAGG), serve as a signal peptide directing secretion. Over 25–511 (SVPHEESSLV…IRTHTLFTPL (487 aa)) the chain is Extracellular. Ig-like C2-type domains are found at residues 27–102 (PHEE…VFVK), 111–194 (DSLI…LNVR), 201–294 (PVIT…LKAL), 303–396 (ATMN…VYVK), and 399–497 (PEIL…FNFA). Cystine bridges form between Cys45/Cys87, Cys126/Cys175, Cys141/Cys172, and Cys222/Cys276. 12 N-linked (GlcNAc...) asparagine glycosylation sites follow: Asn76, Asn135, Asn149, Asn269, Asn286, Asn306, Asn318, Asn338, Asn343, Asn356, Asn453, and Asn469. A disulfide bond links Cys414 and Cys481. A helical transmembrane segment spans residues 512–532 (LIAFGVAAGLMCIIVMILVYI). Over 533–960 (YLQKPKYEVQ…TQPLLVREDV (428 aa)) the chain is Cytoplasmic. Tyr554 contacts Mg(2+). Phosphotyrosine; by autocatalysis occurs at positions 554 and 556. Residues 575-913 (LSFGKTLGAG…QIVQLIEQQL (339 aa)) enclose the Protein kinase domain. ATP is bound by residues 582-589 (GAGAFGKV), Lys609, and 657-663 (EYCCYGD). Phosphotyrosine; by autocatalysis occurs at positions 689 and 706. The active-site Proton acceptor is Asp777. Arg781 provides a ligand contact to ATP. Mg(2+) is bound by residues Asn782 and Asp795. Phosphotyrosine; by autocatalysis is present on residues Tyr808 and Tyr921.

Belongs to the protein kinase superfamily. Tyr protein kinase family. CSF-1/PDGF receptor subfamily. Ubiquitinated. KIT is rapidly ubiquitinated after autophosphorylation induced by KITLG/SCF binding, leading to internalization and degradation. In terms of processing, autophosphorylated on tyrosine residues. KITLG/SCF binding promotes autophosphorylation. Phosphorylated tyrosine residues are important for interaction with specific binding partners. As to expression, high in the brain and testes and also present in the bursa of Fabricus, heart, kidney, lung, spleen thymus and ovary.

Its subcellular location is the cell membrane. It catalyses the reaction L-tyrosyl-[protein] + ATP = O-phospho-L-tyrosyl-[protein] + ADP + H(+). Tyrosine-protein kinase that acts as a cell-surface receptor for the cytokine KITLG/SCF and plays an essential role in the regulation of cell survival and proliferation, hematopoiesis, stem cell maintenance, gametogenesis, mast cell development, migration and function, and in melanogenesis. In response to KITLG/SCF binding, KIT can activate several signaling pathways. Promotes phosphorylation of PIK3R1, the regulatory subunit of phosphatidylinositol 3-kinase, and subsequent activation of the kinase AKT1. Activated KIT also transmits signals via GRB2 and activation of RAS, RAF1 and the MAP kinases MAPK1/ERK2 and/or MAPK3/ERK1. Promotes activation of STAT family members STAT1, STAT3, STAT5A and STAT5B. KIT promotes activation of PLCG1, leading to the production of the cellular signaling molecules diacylglycerol and inositol 1,4,5-trisphosphate. KIT signaling is modulated by protein phosphatases, and by rapid internalization and degradation of the receptor. This Gallus gallus (Chicken) protein is Mast/stem cell growth factor receptor Kit (KIT).